We begin with the raw amino-acid sequence, 274 residues long: Penicillin-insensitive murein endopeptidase (274 aa).

Positions 1 to 19 (MNKTAIALLALLASSASLA) are cleaved as a signal peptide. 3 disulfide bridges follow: Cys44/Cys265, Cys187/Cys235, and Cys216/Cys223. Positions 110, 113, 120, 147, 150, and 211 each coordinate Zn(2+). Positions 227 to 274 (PLPPPGDGCGAELQSWFEPPKPGTTKPEKKTPPPLPPSCQALLDEHVI) are disordered.

The protein belongs to the peptidase M74 family. Dimer. The cofactor is Zn(2+).

The protein resides in the periplasm. Its function is as follows. Murein endopeptidase that cleaves the D-alanyl-meso-2,6-diamino-pimelyl amide bond that connects peptidoglycan strands. Likely plays a role in the removal of murein from the sacculus. In Escherichia coli O1:K1 / APEC, this protein is Penicillin-insensitive murein endopeptidase.